The following is a 490-amino-acid chain: 2,3-bisphosphoglycerate-independent phosphoglycerate mutase (490 aa).

Mn(2+) contacts are provided by D9 and S59. Residue S59 is the Phosphoserine intermediate of the active site. Substrate contacts are provided by residues H116, 145-146, R175, R181, 246-249, and K319; these read RD and RSDR. Residues D385, H389, D426, H427, and H444 each coordinate Mn(2+).

Belongs to the BPG-independent phosphoglycerate mutase family. In terms of assembly, monomer. Mn(2+) serves as cofactor.

It catalyses the reaction (2R)-2-phosphoglycerate = (2R)-3-phosphoglycerate. It participates in carbohydrate degradation; glycolysis; pyruvate from D-glyceraldehyde 3-phosphate: step 3/5. In terms of biological role, catalyzes the interconversion of 2-phosphoglycerate and 3-phosphoglycerate. In Helicobacter hepaticus (strain ATCC 51449 / 3B1), this protein is 2,3-bisphosphoglycerate-independent phosphoglycerate mutase.